Consider the following 106-residue polypeptide: ATP-dependent Clp protease adapter protein ClpS (106 aa).

The protein belongs to the ClpS family. In terms of assembly, binds to the N-terminal domain of the chaperone ClpA.

Involved in the modulation of the specificity of the ClpAP-mediated ATP-dependent protein degradation. The protein is ATP-dependent Clp protease adapter protein ClpS of Vibrio campbellii (strain ATCC BAA-1116).